Reading from the N-terminus, the 538-residue chain is Chaperonin GroEL (538 aa).

Residues 29 to 32 (TIGP), 86 to 90 (DGTTT), Gly413, 476 to 478 (NAA), and Asp492 contribute to the ATP site.

This sequence belongs to the chaperonin (HSP60) family. As to quaternary structure, forms a cylinder of 14 subunits composed of two heptameric rings stacked back-to-back. Interacts with the co-chaperonin GroES.

The protein localises to the cytoplasm. The enzyme catalyses ATP + H2O + a folded polypeptide = ADP + phosphate + an unfolded polypeptide.. Together with its co-chaperonin GroES, plays an essential role in assisting protein folding. The GroEL-GroES system forms a nano-cage that allows encapsulation of the non-native substrate proteins and provides a physical environment optimized to promote and accelerate protein folding. This Staphylococcus aureus (strain Mu3 / ATCC 700698) protein is Chaperonin GroEL.